The following is a 249-amino-acid chain: DNA repair protein RecO (249 aa).

It belongs to the RecO family.

Functionally, involved in DNA repair and RecF pathway recombination. The protein is DNA repair protein RecO of Afipia carboxidovorans (strain ATCC 49405 / DSM 1227 / KCTC 32145 / OM5) (Oligotropha carboxidovorans).